The primary structure comprises 378 residues: GTP 3',8-cyclase 3 (378 aa).

One can recognise a Radical SAM core domain in the interval 40–259 (RCGRTMGDLR…STLGKKYGPI (220 aa)). Arg-49 is a binding site for GTP. [4Fe-4S] cluster is bound by residues Cys-56 and Cys-60. Tyr-62 serves as a coordination point for S-adenosyl-L-methionine. Cys-63 is a [4Fe-4S] cluster binding site. Residue Arg-99 participates in GTP binding. Gly-103 is an S-adenosyl-L-methionine binding site. GTP is bound at residue Thr-134. Position 158 (Ser-158) interacts with S-adenosyl-L-methionine. Residue Lys-195 coordinates GTP. S-adenosyl-L-methionine is bound at residue Met-229. Residues Cys-292 and Cys-295 each contribute to the [4Fe-4S] cluster site. 297–299 (RSR) lines the GTP pocket. Cys-309 is a binding site for [4Fe-4S] cluster.

It belongs to the radical SAM superfamily. MoaA family. Monomer and homodimer. Requires [4Fe-4S] cluster as cofactor.

The enzyme catalyses GTP + AH2 + S-adenosyl-L-methionine = (8S)-3',8-cyclo-7,8-dihydroguanosine 5'-triphosphate + 5'-deoxyadenosine + L-methionine + A + H(+). It functions in the pathway cofactor biosynthesis; molybdopterin biosynthesis. Catalyzes the cyclization of GTP to (8S)-3',8-cyclo-7,8-dihydroguanosine 5'-triphosphate. This Mycobacterium bovis (strain ATCC BAA-935 / AF2122/97) protein is GTP 3',8-cyclase 3.